The sequence spans 125 residues: Acidic phospholipase A2 HTe (125 aa).

Cystine bridges form between Cys11-Cys77, Cys27-Cys124, Cys29-Cys45, Cys44-Cys105, Cys51-Cys98, Cys61-Cys91, and Cys84-Cys96. Residues Tyr28, Gly30, and Gly32 each coordinate Ca(2+). His48 is an active-site residue. Asp49 contributes to the Ca(2+) binding site. Asp99 is an active-site residue.

The protein belongs to the phospholipase A2 family. Group I subfamily. D49 sub-subfamily. The cofactor is Ca(2+). Post-translationally, no glycosylation was detected on this protein. In terms of tissue distribution, expressed by the venom gland.

The protein localises to the secreted. It carries out the reaction a 1,2-diacyl-sn-glycero-3-phosphocholine + H2O = a 1-acyl-sn-glycero-3-phosphocholine + a fatty acid + H(+). Functionally, snake venom phospholipase A2 (PLA2) that blocks neuromuscular transmission, but that does not produce blockade by virtue of a selective action on nerve endings. Instead, the toxin acts both on nerve and on muscle. PLA2 catalyzes the calcium-dependent hydrolysis of the 2-acyl groups in 3-sn-phosphoglycerides. In Notechis scutatus scutatus (Mainland tiger snake), this protein is Acidic phospholipase A2 HTe.